Here is a 608-residue protein sequence, read N- to C-terminus: ESX-3 secretion system protein EccA3 (608 aa).

A disordered region spans residues 284 to 303; sequence EARSDPWDPETEPSEAEFVD. Acidic residues predominate over residues 290–301; the sequence is WDPETEPSEAEF. Position 365–372 (365–372) interacts with ATP; sequence GPPGTGKT.

It belongs to the CbxX/CfxQ family. In terms of assembly, part of the ESX-3 / type VII secretion system (T7SS), which is composed of cytosolic and membrane components.

The protein resides in the cytoplasm. Part of the ESX-3 specialized secretion system, which is required for siderophore-mediated iron acquisition and for the secretion of EsxH and EsxG. EccA3 exhibits ATPase activity and may provide energy for the export of ESX-3 substrates. The polypeptide is ESX-3 secretion system protein EccA3 (Mycolicibacterium smegmatis (strain ATCC 700084 / mc(2)155) (Mycobacterium smegmatis)).